Consider the following 339-residue polypeptide: ATPase GET3 (339 aa).

Residue 34 to 41 participates in ATP binding; it reads KGGVGKTT. Aspartate 63 is a catalytic residue. Residues glutamate 244 and asparagine 271 each contribute to the ATP site. Residues cysteine 282 and cysteine 285 each coordinate Zn(2+).

It belongs to the arsA ATPase family. In terms of assembly, homodimer.

It is found in the cytoplasm. The protein localises to the endoplasmic reticulum. ATPase required for the post-translational delivery of tail-anchored (TA) proteins to the endoplasmic reticulum. Recognizes and selectively binds the transmembrane domain of TA proteins in the cytosol. This complex then targets to the endoplasmic reticulum by membrane-bound receptors, where the tail-anchored protein is released for insertion. This process is regulated by ATP binding and hydrolysis. ATP binding drives the homodimer towards the closed dimer state, facilitating recognition of newly synthesized TA membrane proteins. ATP hydrolysis is required for insertion. Subsequently, the homodimer reverts towards the open dimer state, lowering its affinity for the membrane-bound receptor, and returning it to the cytosol to initiate a new round of targeting. This Podospora anserina (strain S / ATCC MYA-4624 / DSM 980 / FGSC 10383) (Pleurage anserina) protein is ATPase GET3.